Reading from the N-terminus, the 122-residue chain is Autophagy-related protein 8a (122 aa).

The tract at residues 1–21 (MAKSSFKISNPLEARMSESSR) is disordered. A lipid anchor (Phosphatidylethanolamine amidated glycine) is attached at Gly117. The propeptide at 118 to 122 (SLTVA) is removed in mature form.

This sequence belongs to the ATG8 family. In terms of assembly, interacts with ATG4B. Interacts with NBR1. In terms of processing, the C-terminal 5 residues are removed by ATG4 to expose Gly-117 at the C-terminus. This Gly-117 forms then a thioester bond with the 'Cys-558' of ATG7 (E1-like activating enzyme) before being transferred to the 'Cys-258' of ATG3 (the specific E2 conjugating enzyme), in order to be finally amidated with phosphatidylethanolamine. This lipid modification anchors ATG8 to autophagosomes. Constitutively expressed.

The protein resides in the cytoplasmic vesicle. The protein localises to the autophagosome membrane. It localises to the vacuole membrane. It is found in the cytoplasm. Its subcellular location is the cytoskeleton. Its function is as follows. Ubiquitin-like modifier involved in autophagosomes formation. May mediate the delivery of the autophagosomes to the vacuole via the microtubule cytoskeleton. This chain is Autophagy-related protein 8a (ATG8A), found in Arabidopsis thaliana (Mouse-ear cress).